An 868-amino-acid polypeptide reads, in one-letter code: Leucine--tRNA ligase (868 aa).

Residues 42 to 52 (PYPSGKLHMGH) carry the 'HIGH' region motif. The short motif at 627–631 (KMAKS) is the 'KMSKS' region element. Residue Lys-630 participates in ATP binding.

This sequence belongs to the class-I aminoacyl-tRNA synthetase family.

It is found in the cytoplasm. The enzyme catalyses tRNA(Leu) + L-leucine + ATP = L-leucyl-tRNA(Leu) + AMP + diphosphate. In Pseudomonas fluorescens (strain ATCC BAA-477 / NRRL B-23932 / Pf-5), this protein is Leucine--tRNA ligase.